Here is a 521-residue protein sequence, read N- to C-terminus: GMP synthase [glutamine-hydrolyzing] (521 aa).

Residues 8 to 203 (KILILDFGAQ…VVDVCGCQTL (196 aa)) form the Glutamine amidotransferase type-1 domain. The active-site Nucleophile is cysteine 85. Residues histidine 177 and glutamate 179 contribute to the active site. The GMPS ATP-PPase domain occupies 204-396 (WTAANIIDDQ…LGLPRTMVYR (193 aa)). 231–237 (SGGVDSS) contacts ATP.

In terms of assembly, homodimer.

It carries out the reaction XMP + L-glutamine + ATP + H2O = GMP + L-glutamate + AMP + diphosphate + 2 H(+). The protein operates within purine metabolism; GMP biosynthesis; GMP from XMP (L-Gln route): step 1/1. Its function is as follows. Catalyzes the synthesis of GMP from XMP. The polypeptide is GMP synthase [glutamine-hydrolyzing] (Stenotrophomonas maltophilia (strain K279a)).